A 202-amino-acid chain; its full sequence is Large ribosomal subunit protein bL25 (202 aa).

Residues 180 to 202 (PKQEAFEEDAEPSPGEEPEGENQ) are disordered. Over residues 185–202 (FEEDAEPSPGEEPEGENQ) the composition is skewed to acidic residues.

Belongs to the bacterial ribosomal protein bL25 family. CTC subfamily. In terms of assembly, part of the 50S ribosomal subunit; part of the 5S rRNA/L5/L18/L25 subcomplex. Contacts the 5S rRNA. Binds to the 5S rRNA independently of L5 and L18.

Functionally, this is one of the proteins that binds to the 5S RNA in the ribosome where it forms part of the central protuberance. In Bacillus velezensis (strain DSM 23117 / BGSC 10A6 / LMG 26770 / FZB42) (Bacillus amyloliquefaciens subsp. plantarum), this protein is Large ribosomal subunit protein bL25.